Reading from the N-terminus, the 232-residue chain is Clarin-1 (232 aa).

The helical transmembrane segment at 8–28 (IIFCMAGVFSFACALGVVTAL) threads the bilayer. Asparagine 48 carries N-linked (GlcNAc...) asparagine glycosylation. A run of 2 helical transmembrane segments spans residues 101 to 121 (IILF…FFMY) and 135 to 155 (LGLY…MILF). N-linked (GlcNAc...) asparagine glycosylation is present at asparagine 184. Residues 186 to 206 (TTSFWVVFICFFVHFLNGLLI) form a helical membrane-spanning segment.

It belongs to the clarin family.

The protein resides in the cell membrane. In terms of biological role, may have a role in the excitatory ribbon synapse junctions between hair cells and cochlear ganglion cells and presumably also in analogous synapses within the retina. The sequence is that of Clarin-1 (Clrn1) from Rattus norvegicus (Rat).